The primary structure comprises 428 residues: UPF0597 protein PBPRB0240 (428 aa).

The protein belongs to the UPF0597 family.

This chain is UPF0597 protein PBPRB0240, found in Photobacterium profundum (strain SS9).